Reading from the N-terminus, the 293-residue chain is uncharacterized protein (293 aa).

This is an uncharacterized protein from Acanthamoeba polyphaga (Amoeba).